The following is a 471-amino-acid chain: 3-isopropylmalate dehydratase large subunit (471 aa).

[4Fe-4S] cluster is bound by residues cysteine 347, cysteine 407, and cysteine 410. Residues 417–443 (TLQPGERSASTSNRNFEGRQGKGGRTH) form a disordered region.

The protein belongs to the aconitase/IPM isomerase family. LeuC type 1 subfamily. In terms of assembly, heterodimer of LeuC and LeuD. Requires [4Fe-4S] cluster as cofactor.

It carries out the reaction (2R,3S)-3-isopropylmalate = (2S)-2-isopropylmalate. It participates in amino-acid biosynthesis; L-leucine biosynthesis; L-leucine from 3-methyl-2-oxobutanoate: step 2/4. Catalyzes the isomerization between 2-isopropylmalate and 3-isopropylmalate, via the formation of 2-isopropylmaleate. In Nocardioides sp. (strain ATCC BAA-499 / JS614), this protein is 3-isopropylmalate dehydratase large subunit.